We begin with the raw amino-acid sequence, 565 residues long: Fusion glycoprotein F0 (565 aa).

A signal peptide spans 1–25 (MATYIQRVQCISALLSVVLTTLVSC). The Extracellular portion of the chain corresponds to 26–500 (QIPRDRLSNI…VGRWYNSGAT (475 aa)). Cys-70 and Cys-199 are disulfide-bonded. An N-linked (GlcNAc...) asparagine; by host glycan is attached at Asn-104. The segment at 117 to 141 (FFGAVIGTIALGVATSAQITAGIAL) is fusion peptide. Residues 142–170 (AEAREAKRDIALIKESMTKTHKSIELLQN) adopt a coiled-coil conformation. A glycan (N-linked (GlcNAc...) asparagine; by host) is linked at Asn-245. Positions 269–307 (IKGTVIDVDLERYMVTLSVKIPILSEVPGVLIHKASSIS) are leucine-zipper. Intrachain disulfides connect Cys-338–Cys-347, Cys-362–Cys-370, Cys-394–Cys-399, and Cys-401–Cys-424. N-linked (GlcNAc...) asparagine; by host glycosylation is present at Asn-449. Residues 466 to 491 (NLAAATDFLQDSRAELEKARKILSEV) are a coiled coil. A helical membrane pass occupies residues 501–521 (LITIIVVMIVVLVVIIVIVIV). Residues 522-565 (LYRLRRSMLMSNPAGRISRDTYTLEPKIRHMYTNGGFDAMTEKR) are Cytoplasmic-facing.

Belongs to the paramyxoviruses fusion glycoprotein family. In terms of assembly, homotrimer of disulfide-linked F1-F2. Interacts with HN and M proteins. Post-translationally, in natural infection, inactive F0 is matured into F1 and F2 outside the cell by one or more trypsin-like, arginine-specific endoprotease secreted by the bronchial epithelial cells. One identified protease that may be involved in this process is tryptase Clara. Unlike most paramyxoviruses, Sendai F0 processing occurs on the cell surface and induces a conformational change in the protein that unmasks the fusion peptide. F0 maturation is a primary determinant for organ tropism and pathogenicity. F1 and F2 display interchain and intrachain disulfide bonds, that are necessary for correct folding and intracellular transport. In terms of processing, N-glycosylated; glycans consist of a mixture of high mannose-type oligosaccharides and of complex-type oligosaccharides. Glycosylation at Asn-245 is essential for membrane localization and F0 cleavage.

The protein localises to the virion membrane. It is found in the host cell membrane. In terms of biological role, class I viral fusion protein. Under the current model, the protein has at least 3 conformational states: pre-fusion native state, pre-hairpin intermediate state, and post-fusion hairpin state. During viral and plasma cell membrane fusion, the heptad repeat (HR) regions assume a trimer-of-hairpins structure, positioning the fusion peptide in close proximity to the C-terminal region of the ectodomain. The formation of this structure appears to drive apposition and subsequent fusion of viral and plasma cell membranes. Directs fusion of viral and cellular membranes leading to delivery of the nucleocapsid into the cytoplasm. This fusion is pH independent and occurs directly at the outer cell membrane. The trimer of F1-F2 (F protein) interacts with HN tetramer at the virion surface. Upon HN binding to its cellular receptor, the hydrophobic fusion peptide is unmasked and interacts with the cellular membrane, inducing the fusion between cell and virion membranes. Later in infection, F proteins expressed at the plasma membrane of infected cells could mediate fusion with adjacent cells to form syncytia, a cytopathic effect that could lead to tissue necrosis. In Sendai virus (strain Hamamatsu) (SeV), this protein is Fusion glycoprotein F0 (F).